The chain runs to 266 residues: MDTFQVIILALIQGLTEFLPISSSAHLILPSQILGWEDQGLAFDVAVHIGSLLAVVLYFRKEVVSLLTSWLASIFKGQKSDDSKLAWWIILATLPAVILGFALKDMIEVYLRGPGVIAITTVLFGLLLWWADRMSRCELTEYQTGWKKALLIGFAQALALIPGTSRSGATITAALMLGLNREAAARFSFLMSIPVILGAAILMSKDLFESGHVIDYSSLALGVGVSFVAAYTCIHLFLKIISRMGMTPFVIYRLALGALLCAFIFM.

Helical transmembrane passes span 1–21 (MDTFQVIILALIQGLTEFLPI), 39–59 (QGLAFDVAVHIGSLLAVVLYF), 83–103 (SKLAWWIILATLPAVILGFAL), 111–131 (LRGPGVIAITTVLFGLLLWWA), 144–164 (TGWKKALLIGFAQALALIPGT), 183–203 (AAARFSFLMSIPVILGAAILM), 218–238 (SLALGVGVSFVAAYTCIHLFL), and 246–266 (MTPFVIYRLALGALLCAFIFM).

Belongs to the UppP family.

It localises to the cell inner membrane. It carries out the reaction di-trans,octa-cis-undecaprenyl diphosphate + H2O = di-trans,octa-cis-undecaprenyl phosphate + phosphate + H(+). Catalyzes the dephosphorylation of undecaprenyl diphosphate (UPP). Confers resistance to bacitracin. The sequence is that of Undecaprenyl-diphosphatase from Shewanella woodyi (strain ATCC 51908 / MS32).